The primary structure comprises 423 residues: Enolase (423 aa).

A (2R)-2-phosphoglycerate-binding site is contributed by Q163. E205 acts as the Proton donor in catalysis. D242, E285, and D312 together coordinate Mg(2+). Positions 337, 366, 367, and 388 each coordinate (2R)-2-phosphoglycerate. The active-site Proton acceptor is the K337.

This sequence belongs to the enolase family. Mg(2+) is required as a cofactor.

The protein localises to the cytoplasm. It is found in the secreted. The protein resides in the cell surface. It carries out the reaction (2R)-2-phosphoglycerate = phosphoenolpyruvate + H2O. It participates in carbohydrate degradation; glycolysis; pyruvate from D-glyceraldehyde 3-phosphate: step 4/5. Functionally, catalyzes the reversible conversion of 2-phosphoglycerate (2-PG) into phosphoenolpyruvate (PEP). It is essential for the degradation of carbohydrates via glycolysis. The polypeptide is Enolase (Desulforapulum autotrophicum (strain ATCC 43914 / DSM 3382 / VKM B-1955 / HRM2) (Desulfobacterium autotrophicum)).